The chain runs to 87 residues: uncharacterized protein (87 aa).

Residues 63-83 (IVLALVLGVFSLVGLIFIIYF) form a helical membrane-spanning segment.

The protein localises to the membrane. This is an uncharacterized protein from Dictyostelium discoideum (Social amoeba).